A 381-amino-acid chain; its full sequence is Cytosolic acyl coenzyme A thioester hydrolase (381 aa).

The 119-residue stretch at 51-169 folds into the HotDog ACOT-type 1 domain; that stretch reads LGHCVTMGRI…TLWYVPLSLK (119 aa). Residue Asn-67 is part of the active site. 2 positions are modified to N6-acetyllysine: Lys-169 and Lys-199. The HotDog ACOT-type 2 domain maps to 225–339; the sequence is SYSQSSLIHL…FFTYVSLNQE (115 aa). Residue Asp-256 is part of the active site. Lys-284 carries the post-translational modification N6-acetyllysine. The segment at 342-381 is disordered; it reads PMPVPQLVPETEDEKKRFEEGKGRYLQMKAKRQGHTEPQP. Residues 354–364 are compositionally biased toward basic and acidic residues; it reads DEKKRFEEGKG.

Homohexamer. Widely expressed with highest levels in brain. High levels also found in thymus, large intestine and testis. Negligible in muscle and adipose tissue. In the central and peripheral nervous systems, displays a predominantly neuronal localization with highest expression in cell bodies and neurites.

It localises to the cytoplasm. The protein localises to the cytosol. The catalysed reaction is hexadecanoyl-CoA + H2O = hexadecanoate + CoA + H(+). It carries out the reaction dodecanoyl-CoA + H2O = dodecanoate + CoA + H(+). The enzyme catalyses tetradecanoyl-CoA + H2O = tetradecanoate + CoA + H(+). It catalyses the reaction decanoyl-CoA + H2O = decanoate + CoA + H(+). The catalysed reaction is octanoyl-CoA + H2O = octanoate + CoA + H(+). It carries out the reaction octadecanoyl-CoA + H2O = octadecanoate + CoA + H(+). The enzyme catalyses (9Z)-octadecenoyl-CoA + H2O = (9Z)-octadecenoate + CoA + H(+). Its pathway is lipid metabolism; fatty acid metabolism. In terms of biological role, catalyzes the hydrolysis of acyl-CoAs into free fatty acids and coenzyme A (CoASH), regulating their respective intracellular levels. Preferentially hydrolyzes palmitoyl-CoA, but has a broad specificity acting on other fatty acyl-CoAs with chain-lengths of C8-C18. May play an important physiological function in brain. The chain is Cytosolic acyl coenzyme A thioester hydrolase (Acot7) from Mus musculus (Mouse).